The primary structure comprises 368 residues: Phosphate acyltransferase (368 aa).

The protein belongs to the PlsX family. Homodimer. Probably interacts with PlsY.

It is found in the cytoplasm. It catalyses the reaction a fatty acyl-[ACP] + phosphate = an acyl phosphate + holo-[ACP]. It functions in the pathway lipid metabolism; phospholipid metabolism. Functionally, catalyzes the reversible formation of acyl-phosphate (acyl-PO(4)) from acyl-[acyl-carrier-protein] (acyl-ACP). This enzyme utilizes acyl-ACP as fatty acyl donor, but not acyl-CoA. This is Phosphate acyltransferase from Methylibium petroleiphilum (strain ATCC BAA-1232 / LMG 22953 / PM1).